The primary structure comprises 272 residues: Protein UL24 homolog (272 aa).

This sequence belongs to the herpesviridae UL24 family.

The protein resides in the virion. It localises to the host cytoplasm. Its subcellular location is the host nucleus. It is found in the host nucleolus. The protein localises to the host Golgi apparatus. May participate in nuclear egress of viral particles. Plays a role in the dispersal of several host nucleolar proteins including NCL/nucleolin and NPM1. Since deletion of host NCL/nucleolin negatively impact on nuclear egress, UL24 supposedly acts on this process through its effect on host nucleoli. The chain is Protein UL24 homolog from Equine herpesvirus 1 (strain V592) (EHV-1).